Reading from the N-terminus, the 860-residue chain is uncharacterized protein (860 aa).

2 stretches are compositionally biased toward basic and acidic residues: residues 334–345 (LEKKSLQSDSKN) and 536–551 (EDQK…LSDK). 4 disordered regions span residues 334–360 (LEKK…LRKE), 530–551 (EEDD…LSDK), 708–798 (ARKT…EDEF), and 813–842 (PFNE…RKAI). 3 stretches are compositionally biased toward acidic residues: residues 716–725 (DEEGEIDEDE), 738–750 (EMDE…DSEE), and 813–824 (PFNETDDEEEIQ). Residues Ser-744 and Ser-748 each carry the phosphoserine modification.

It belongs to the CBF/MAK21 family.

This is an uncharacterized protein from Schizosaccharomyces pombe (strain 972 / ATCC 24843) (Fission yeast).